The chain runs to 658 residues: UvrABC system protein C (658 aa).

The region spanning 62 to 140 is the GIY-YIG domain; that stretch reads PKPGVYRMLD…IKRFRPPYNV (79 aa). Residues 250–285 form the UVR domain; the sequence is GAVQREIEAQMHKAAEDLDFERAAMLRDRLRAATFI.

It belongs to the UvrC family. In terms of assembly, interacts with UvrB in an incision complex.

The protein resides in the cytoplasm. In terms of biological role, the UvrABC repair system catalyzes the recognition and processing of DNA lesions. UvrC both incises the 5' and 3' sides of the lesion. The N-terminal half is responsible for the 3' incision and the C-terminal half is responsible for the 5' incision. This Novosphingobium aromaticivorans (strain ATCC 700278 / DSM 12444 / CCUG 56034 / CIP 105152 / NBRC 16084 / F199) protein is UvrABC system protein C.